Reading from the N-terminus, the 139-residue chain is Transcription antitermination protein NusB (139 aa).

The protein belongs to the NusB family.

Functionally, involved in transcription antitermination. Required for transcription of ribosomal RNA (rRNA) genes. Binds specifically to the boxA antiterminator sequence of the ribosomal RNA (rrn) operons. This chain is Transcription antitermination protein NusB, found in Klebsiella pneumoniae (strain 342).